The chain runs to 309 residues: Lipoyl synthase (309 aa).

[4Fe-4S] cluster-binding residues include C37, C42, C48, C67, C71, C74, and S281. In terms of domain architecture, Radical SAM core spans 53–270 (DGPGTATFML…RVAETEFGFL (218 aa)).

Belongs to the radical SAM superfamily. Lipoyl synthase family. It depends on [4Fe-4S] cluster as a cofactor.

It is found in the cytoplasm. It carries out the reaction [[Fe-S] cluster scaffold protein carrying a second [4Fe-4S](2+) cluster] + N(6)-octanoyl-L-lysyl-[protein] + 2 oxidized [2Fe-2S]-[ferredoxin] + 2 S-adenosyl-L-methionine + 4 H(+) = [[Fe-S] cluster scaffold protein] + N(6)-[(R)-dihydrolipoyl]-L-lysyl-[protein] + 4 Fe(3+) + 2 hydrogen sulfide + 2 5'-deoxyadenosine + 2 L-methionine + 2 reduced [2Fe-2S]-[ferredoxin]. It functions in the pathway protein modification; protein lipoylation via endogenous pathway; protein N(6)-(lipoyl)lysine from octanoyl-[acyl-carrier-protein]: step 2/2. Catalyzes the radical-mediated insertion of two sulfur atoms into the C-6 and C-8 positions of the octanoyl moiety bound to the lipoyl domains of lipoate-dependent enzymes, thereby converting the octanoylated domains into lipoylated derivatives. This is Lipoyl synthase from Natronomonas pharaonis (strain ATCC 35678 / DSM 2160 / CIP 103997 / JCM 8858 / NBRC 14720 / NCIMB 2260 / Gabara) (Halobacterium pharaonis).